The primary structure comprises 321 residues: Glucokinase (321 aa).

8-13 (GDVGGT) is a binding site for ATP.

This sequence belongs to the bacterial glucokinase family.

It is found in the cytoplasm. It catalyses the reaction D-glucose + ATP = D-glucose 6-phosphate + ADP + H(+). The sequence is that of Glucokinase from Escherichia fergusonii (strain ATCC 35469 / DSM 13698 / CCUG 18766 / IAM 14443 / JCM 21226 / LMG 7866 / NBRC 102419 / NCTC 12128 / CDC 0568-73).